The chain runs to 551 residues: Probable NADH-ubiquinone oxidoreductase C3A11.07, mitochondrial (551 aa).

The N-terminal 37 residues, 1–37 (MLFSRSILRGMPKAGIPKSPLALSASRNLRLANSVRF), are a transit peptide targeting the mitochondrion. 93–123 (TLVVLGAGWGATSILRTIDTSLFNVIVVSPR) provides a ligand contact to FAD. An NAD(+)-binding site is contributed by 255–291 (VHTVVVGGGPTGMEFAGEMADFIEDDLKSWYPELADD).

It belongs to the NADH dehydrogenase family.

The protein localises to the mitochondrion. The catalysed reaction is a quinone + NADH + H(+) = a quinol + NAD(+). The enzyme catalyses a ubiquinone + NADH + H(+) = a ubiquinol + NAD(+). Catalyzes the oxidation of NADH. This is Probable NADH-ubiquinone oxidoreductase C3A11.07, mitochondrial from Schizosaccharomyces pombe (strain 972 / ATCC 24843) (Fission yeast).